The sequence spans 876 residues: E3 ubiquitin-protein ligase TRIM71 (876 aa).

The RING-type zinc finger occupies 12–90; it reads CPLCKEMCGS…ALKLRCPICD (79 aa). Positions 26–40 are enriched in low complexity; the sequence is SSNSSTSSSSSQTSG. Disordered regions lie at residues 26–46 and 128–192; these read SSNS…GGGG and KNGR…AALL. Gly residues predominate over residues 137-148; sequence PAAGSGAGGGGA. Residues 160 to 182 show a composition bias toward low complexity; that stretch reads RAAAAASSPAAGSAAPSASSSSS. The B box-type 1; atypical zinc-finger motif lies at 200-247; the sequence is QGEPRCSSCDEGNAASSRCLDCQEHLCDNCVRAHQRVRLTKDHFIERF. Positions 205, 208, 229, 233, 286, 289, 309, and 314 each coordinate Zn(2+). The B box-type 2 zinc finger occupies 281-322; that stretch reads ERASYCQHHDDEVLHFYCDTCSVPICRECTMGRHVGHSFIYL. Coiled coils occupy residues 344–373 and 399–434; these read RQAI…SEVK and QVKA…EEGR. Residues 487 to 588 form a Filamin repeat; that stretch reads SSGAFAPLTK…IENSPFKVVV (102 aa). 6 NHL repeats span residues 601-644, 648-691, 695-738, 742-785, 789-832, and 836-876; these read GLSF…FKPC, HHKF…FTFE, ILKF…FGPD, LNKY…IHAD, ARFL…FESN, and LCKF…ILVF.

The protein belongs to the TRIM/RBCC family.

The protein resides in the cytoplasm. The protein localises to the P-body. It carries out the reaction S-ubiquitinyl-[E2 ubiquitin-conjugating enzyme]-L-cysteine + [acceptor protein]-L-lysine = [E2 ubiquitin-conjugating enzyme]-L-cysteine + N(6)-ubiquitinyl-[acceptor protein]-L-lysine.. It functions in the pathway protein modification; protein ubiquitination. E3 ubiquitin-protein ligase that cooperates with the microRNAs (miRNAs) machinery and promotes embryonic stem cells proliferation and maintenance. Binds to miRNAs and participates in post-transcriptional repression of transcripts. Required to maintain proliferation and prevent premature differentiation of neural progenitor cells during early neural development. The chain is E3 ubiquitin-protein ligase TRIM71 (TRIM71) from Gallus gallus (Chicken).